Here is a 200-residue protein sequence, read N- to C-terminus: Imidazole glycerol phosphate synthase subunit HisH (200 aa).

Residues 3-200 (DLALIDAGGA…LRNFLEMSFP (198 aa)) form the Glutamine amidotransferase type-1 domain. The Nucleophile role is filled by Cys-78. Catalysis depends on residues His-179 and Glu-181.

Heterodimer of HisH and HisF.

Its subcellular location is the cytoplasm. It carries out the reaction 5-[(5-phospho-1-deoxy-D-ribulos-1-ylimino)methylamino]-1-(5-phospho-beta-D-ribosyl)imidazole-4-carboxamide + L-glutamine = D-erythro-1-(imidazol-4-yl)glycerol 3-phosphate + 5-amino-1-(5-phospho-beta-D-ribosyl)imidazole-4-carboxamide + L-glutamate + H(+). The catalysed reaction is L-glutamine + H2O = L-glutamate + NH4(+). Its pathway is amino-acid biosynthesis; L-histidine biosynthesis; L-histidine from 5-phospho-alpha-D-ribose 1-diphosphate: step 5/9. Its function is as follows. IGPS catalyzes the conversion of PRFAR and glutamine to IGP, AICAR and glutamate. The HisH subunit catalyzes the hydrolysis of glutamine to glutamate and ammonia as part of the synthesis of IGP and AICAR. The resulting ammonia molecule is channeled to the active site of HisF. The chain is Imidazole glycerol phosphate synthase subunit HisH from Xanthomonas campestris pv. campestris (strain 8004).